A 112-amino-acid polypeptide reads, in one-letter code: Large ribosomal subunit protein uL22 (112 aa).

This sequence belongs to the universal ribosomal protein uL22 family. In terms of assembly, part of the 50S ribosomal subunit.

In terms of biological role, this protein binds specifically to 23S rRNA; its binding is stimulated by other ribosomal proteins, e.g. L4, L17, and L20. It is important during the early stages of 50S assembly. It makes multiple contacts with different domains of the 23S rRNA in the assembled 50S subunit and ribosome. Its function is as follows. The globular domain of the protein is located near the polypeptide exit tunnel on the outside of the subunit, while an extended beta-hairpin is found that lines the wall of the exit tunnel in the center of the 70S ribosome. This Mesoplasma florum (strain ATCC 33453 / NBRC 100688 / NCTC 11704 / L1) (Acholeplasma florum) protein is Large ribosomal subunit protein uL22.